A 564-amino-acid chain; its full sequence is CTP synthase (564 aa).

The interval Met-1 to Ile-265 is amidoligase domain. Ser-13 is a CTP binding site. Residue Ser-13 participates in UTP binding. Residues Ser-14–Ile-19 and Asp-71 contribute to the ATP site. Mg(2+) contacts are provided by Asp-71 and Glu-139. CTP-binding positions include Asp-146–Glu-148, Lys-186–Gln-191, and Lys-222. UTP-binding positions include Lys-186–Gln-191 and Lys-222. The region spanning Ser-290–Lys-543 is the Glutamine amidotransferase type-1 domain. An L-glutamine-binding site is contributed by Gly-351. Cys-378 serves as the catalytic Nucleophile; for glutamine hydrolysis. Residues Leu-379–Gln-382, Glu-402, and Arg-469 each bind L-glutamine. Active-site residues include His-516 and Glu-518.

Belongs to the CTP synthase family. In terms of assembly, homotetramer.

It carries out the reaction UTP + L-glutamine + ATP + H2O = CTP + L-glutamate + ADP + phosphate + 2 H(+). The catalysed reaction is L-glutamine + H2O = L-glutamate + NH4(+). It catalyses the reaction UTP + NH4(+) + ATP = CTP + ADP + phosphate + 2 H(+). It participates in pyrimidine metabolism; CTP biosynthesis via de novo pathway; CTP from UDP: step 2/2. With respect to regulation, allosterically activated by GTP, when glutamine is the substrate; GTP has no effect on the reaction when ammonia is the substrate. The allosteric effector GTP functions by stabilizing the protein conformation that binds the tetrahedral intermediate(s) formed during glutamine hydrolysis. Inhibited by the product CTP, via allosteric rather than competitive inhibition. Its function is as follows. Catalyzes the ATP-dependent amination of UTP to CTP with either L-glutamine or ammonia as the source of nitrogen. Regulates intracellular CTP levels through interactions with the four ribonucleotide triphosphates. The protein is CTP synthase of Nitrosomonas eutropha (strain DSM 101675 / C91 / Nm57).